We begin with the raw amino-acid sequence, 339 residues long: Phenylalanine--tRNA ligase alpha subunit (339 aa).

Residue Glu-253 coordinates Mg(2+).

This sequence belongs to the class-II aminoacyl-tRNA synthetase family. Phe-tRNA synthetase alpha subunit type 1 subfamily. Tetramer of two alpha and two beta subunits. Mg(2+) serves as cofactor.

Its subcellular location is the cytoplasm. It catalyses the reaction tRNA(Phe) + L-phenylalanine + ATP = L-phenylalanyl-tRNA(Phe) + AMP + diphosphate + H(+). In Ruthia magnifica subsp. Calyptogena magnifica, this protein is Phenylalanine--tRNA ligase alpha subunit.